Consider the following 817-residue polypeptide: Protein hunchback (817 aa).

Disordered stretches follow at residues 51–77 (PGTINPHHQHPQQHSSMMASQPQHSPL), 93–132 (HNGGGAHHLQFSDNSGAMTPSPNTNVGGQDFGFESNTSSA), and 187–252 (YSQQ…EDQD). Low complexity predominate over residues 62–76 (QQHSSMMASQPQHSP). Over residues 103–119 (FSDNSGAMTPSPNTNVG) the composition is skewed to polar residues. Low complexity predominate over residues 189–201 (QQQQQQQQRQLQQ). 4 C2H2-type zinc fingers span residues 287-309 (HKCKSCGMVAITKMAFWEHARTH), 316-338 (LQCPKCPFVTELKHHLEYHIRKH), 344-366 (FQCDKCSYSCVNKSMLNSHRKSH), and 372-396 (YRCADCDYATKYCHSFKLHLRKYEH). Disordered stretches follow at residues 456 to 477 (PLQQQQQPQQPASPAKSSSSVA), 491 to 513 (QNLAQQQQQQQQSPGAQSHSSQQ), 564 to 619 (QLQQ…QQTP), and 666 to 758 (APTS…AGNS). A compositionally biased stretch (low complexity) spans 564–576 (QLQQQQQNKQANE). Residues 577–595 (NGEEDEEDNDEVDEDEEEF) are compositionally biased toward acidic residues. Positions 680–694 (MPPTTSSPIHPSQVN) are enriched in polar residues. The segment covering 721 to 758 (PTTANTSASSTASSSGNSSNSSSTSTSSNSNSSSAGNS) has biased composition (low complexity). 2 consecutive C2H2-type zinc fingers follow at residues 764-786 (YECKYCDIFFKDAVLYTIHMGYH) and 792-816 (FKCNMCGEKCDGPVGLFVHMARNAH).

This sequence belongs to the hunchback C2H2-type zinc-finger protein family.

The protein resides in the nucleus. Its function is as follows. Gap class segmentation protein that controls development of head structures. The chain is Protein hunchback (hb) from Musca domestica (House fly).